The chain runs to 266 residues: UPF0294 protein YafD (266 aa).

This sequence belongs to the UPF0294 family.

The protein resides in the cytoplasm. The polypeptide is UPF0294 protein YafD (yafD) (Escherichia coli O157:H7).